An 864-amino-acid polypeptide reads, in one-letter code: MFPNVTGLLNKGHKIRGTVVLMRKNVLDFNTIVSIGGGNVHGVIDSGINIIGSTLDGLTAFLGRSVSLQLISATKSDANGKGKVGKDTFLEGVLASLPTLGAGESAFNIHFEWDHEMGIPGAFYIKNYMQVEFFLKSLTLEDVPNHGTIRFVCNSWVYNSKLYKSPRIFFANKSYLPSETPSPLVKYREEELQTLRGDGTGERKLHERIYDYDVYNDLGNPDHGEHLARPILGGSSTHPYPRRGRTGRYPTRKDPNSEKPATETYVPRDENFGHLKSSDFLAYGIKSVSQCVVPAFESAFDLNFTPNEFDSFQDVRNLFEGGIKLPLDVISTLSPLPVVKEIFRTDGEQVLKFTPPHVIRVSKSAWMTDEEFAREMLAGVNPCMIRGLQEFPPKSNLDPAEYGDHTSKISVDVLNLDGCTIDEALASGRLFILDYHDTFIPFLRRINETSAKAYATRTILFLKENGTLKPVAIELSLPHPDGDKSGFVSKVILPADEGVESTIWLLAKAYVVVNDSCYHQLMSHWLNTHAVIEPFVIATNRQLSVVHPINKLLAPHYRDTMMNINALARDSLINANGLIERSFLPSKYAVEMSSAVYKYWVFTDQALPNDLIKRNMAVKDSSSPYGLRLLIEDYPYAVDGLEIWTAIKTWVQDYVSLYYATDNDIKNDSELQHWWKEVVEKGHGDLKDKPWWPKLQTFDELVEVCTIIIWTASALHAAVNFGQYPYGGLILNRPTLSRRLLPEEGTAEYDEMVKSSQKAYLRTITPKFQTLIDLSVIEILSRHASDEVYLGQRENPHWTSDSKALQAFQKFGNKLAEIEAKLTNKNNDPSLYHRVGPVQLPYTLLHPSSKEGLTFRGIPNSISI.

A PLAT domain is found at 46–171 (SGINIIGSTL…LYKSPRIFFA (126 aa)). A Lipoxygenase domain is found at 174-864 (SYLPSETPSP…FRGIPNSISI (691 aa)). The interval 230-264 (PILGGSSTHPYPRRGRTGRYPTRKDPNSEKPATET) is disordered. Residues 251-264 (TRKDPNSEKPATET) show a composition bias toward basic and acidic residues. 5 residues coordinate Fe cation: H524, H529, H716, N720, and I864.

The protein belongs to the lipoxygenase family. Requires Fe cation as cofactor.

It is found in the cytoplasm. The enzyme catalyses (9Z,12Z)-octadecadienoate + O2 = (9S)-hydroperoxy-(10E,12Z)-octadecadienoate. The protein operates within lipid metabolism; oxylipin biosynthesis. Its function is as follows. Plant lipoxygenase may be involved in a number of diverse aspects of plant physiology including growth and development, pest resistance, and senescence or responses to wounding. It catalyzes the hydroperoxidation of lipids containing a cis,cis-1,4-pentadiene structure. This chain is Seed linoleate 9S-lipoxygenase-2 (LOX1.2), found in Pisum sativum (Garden pea).